Consider the following 298-residue polypeptide: Inosose dehydratase (298 aa).

The protein belongs to the IolE/MocC family. The cofactor is glutathione. Co(2+) is required as a cofactor. Requires Mn(2+) as cofactor.

The catalysed reaction is scyllo-inosose = 3D-3,5/4-trihydroxycyclohexane-1,2-dione + H2O. Its pathway is polyol metabolism; myo-inositol degradation into acetyl-CoA; acetyl-CoA from myo-inositol: step 2/7. Functionally, catalyzes the dehydration of inosose (2-keto-myo-inositol, 2KMI or 2,4,6/3,5-pentahydroxycyclohexanone) to 3D-(3,5/4)-trihydroxycyclohexane-1,2-dione (D-2,3-diketo-4-deoxy-epi-inositol). In Bacillus anthracis (strain CDC 684 / NRRL 3495), this protein is Inosose dehydratase.